The sequence spans 905 residues: NADH-quinone oxidoreductase subunit G (905 aa).

The 2Fe-2S ferredoxin-type domain maps to 1 to 83 (MATIHVDGKT…NTWISIEDEE (83 aa)). Positions 34, 45, 48, and 67 each coordinate [2Fe-2S] cluster. Residues 83–122 (EAKQFRASVVEWLMTNHPHDCPVCEEGGHCHLQDMTVMTG) enclose the 4Fe-4S His(Cys)3-ligated-type domain. Residues His99, Cys103, Cys106, Cys112, Cys151, Cys154, Cys157, Cys201, Cys228, Cys231, Cys235, and Cys263 each contribute to the [4Fe-4S] cluster site. One can recognise a 4Fe-4S Mo/W bis-MGD-type domain in the interval 221 to 277 (MQFAPSICHGCSSGCNISPGERYGEIRRIENRYNGSVNHYFLCDRGRFGYGYVNRED).

This sequence belongs to the complex I 75 kDa subunit family. As to quaternary structure, composed of 13 different subunits. Subunits NuoCD, E, F, and G constitute the peripheral sector of the complex. [2Fe-2S] cluster is required as a cofactor. It depends on [4Fe-4S] cluster as a cofactor.

It carries out the reaction a quinone + NADH + 5 H(+)(in) = a quinol + NAD(+) + 4 H(+)(out). NDH-1 shuttles electrons from NADH, via FMN and iron-sulfur (Fe-S) centers, to quinones in the respiratory chain. The immediate electron acceptor for the enzyme in this species is believed to be ubiquinone. Couples the redox reaction to proton translocation (for every two electrons transferred, four hydrogen ions are translocated across the cytoplasmic membrane), and thus conserves the redox energy in a proton gradient. This is NADH-quinone oxidoreductase subunit G (nuoG) from Pseudomonas aeruginosa (strain ATCC 15692 / DSM 22644 / CIP 104116 / JCM 14847 / LMG 12228 / 1C / PRS 101 / PAO1).